The following is a 2789-amino-acid chain: Testis-expressed protein 15 (2789 aa).

Over residues 34 to 46 (HNNTGSSTVTTSK) the composition is skewed to polar residues. Disordered regions lie at residues 34–99 (HNNT…SSEV), 169–191 (ENQNHSEEKAQRAQQESGNAYTK), 1063–1166 (FSSK…EHQP), 2303–2331 (KNISNSSKKRPSTVDKCEDSQEQQQDTTV), and 2351–2379 (KATFKHPRTTGSHPKSENKIVPSSCDSLK). Basic and acidic residues predominate over residues 47–59 (SIKDPRLMRREES). A compositionally biased stretch (polar residues) spans 80–98 (DNVNSEIKSTPSNSASSSE). The segment covering 170-179 (NQNHSEEKAQ) has biased composition (basic and acidic residues). Residues 1063-1077 (FSSKRKYDKRRKKRA) are compositionally biased toward basic residues. 2 stretches are compositionally biased toward low complexity: residues 1106 to 1116 (RKSMASSVSKS) and 1134 to 1160 (SQLPVSSTSQSTSQSVYYNSSVSNPSL).

It belongs to the TEX15 family. In terms of assembly, interacts with PIWIL4 and PIWIL2. As to expression, expressed in testis, predominantly in germ cells. Low expression, if any, in ovary. Also expressed in several cancers.

The protein resides in the cytoplasm. The protein localises to the nucleus. In terms of biological role, required during spermatogenesis for normal chromosome synapsis and meiotic recombination in germ cells. Necessary for formation of DMC1 and RAD51 foci on meiotic chromosomes, suggesting a specific role in DNA double-stranded break repair. Essential executor of PIWIL4-piRNA pathway directed transposon DNA methylation and silencing in the male embryonic germ cells. PIWIL4-piRNA binds to nascent transposon transcripts and interacts with TEX15, which may in turn recruit the epigenetic silencing machinery to the transposon loci. Not required for piRNA biosynthesis. This chain is Testis-expressed protein 15 (TEX15), found in Homo sapiens (Human).